We begin with the raw amino-acid sequence, 833 residues long: MSGVVLLVLAIILITIFSLIYYTIFFEFDETTFSKRLRVLTEYAKRTNADKPTPDVLGHVSDVYDHTYIVSWFRTNDLSTYHETVHDDTVEVFDFLEQQFSGAQATVTQRVAPVAAELDAFVVTNDAGDVKLRCPQNFSFDYGQLKCVPEDPCSGRPPGRYPMNELLLDTLVHNQHSDKNYSAGAHLYHPTLYLRCLANGSHAVRECPDNYTFDAEAGECRVNELCEGRPDGFVLPYFPEALLVNEFVECRNGEHVVAQCADGQVFDRALMTCVHAHPCAFNGAGHTYITSDIGDTQFFKCLNNHEAQLVTCINRAHGADGQYACSGDARCADLPKGTGQLVHIHTDDTFEYASGQMICDNYEVVSEINCDTGDVLGDKLFINKFKLNVQFPLEVLEFGACAPATLNNVSVLNDTFPIENAPNDYGVNMQTSVVGRTSMVAKLMAGDDPDTAFGENVLLARDVNTVGLNPFTAEPIDCFGAQLYDVMDAHRANVCTESGNDLLKTVEFGDGAFLSVFRDDLTGSDADYKQFCAISYESPLKIVKSDHFQRRILTNILQSDICADLYTTIYQKYTTLARKYTTSPVQYNYTFVKRPENMVVYAKNTRFKNATISEPAFDLFAAQTTDKENGFARSLFDPFADGVWRSEPGGDGDHWAPEVPPTQPEPELEPESETELDSDLELEPEFSPLILNKKDLFYSCFYELPSFKLSSCHAENDVIVDALQQLRASVKVDTECELAKDLHFVLNAYAYTGNNIGCRSVFDGDDVAVVKEPVPSYVFTNLQTQSNDGVRYNKHVHVKDGRYMACPEHLYDDEAFACNAEPDKLYYLENMQQ.

A signal peptide spans 1–18; the sequence is MSGVVLLVLAIILITIFS. N137, N180, N199, and N210 each carry an N-linked (GlcNAc...) asparagine; by host glycan. Residues 147 to 196 form a C2HC BV-type zinc finger; sequence CVPEDPCSGRPPGRYPMNELLLDTLVHNQHSDKNYSAGAHLYHPTLYLRC. Disulfide bonds link C207-C220 and C260-C273. The Chitin-binding type-2 domain maps to 223-281; sequence NELCEGRPDGFVLPYFPEALLVNEFVECRNGEHVVAQCADGQVFDRALMTCVHAHPCAF. Residues N408, N413, N588, and N609 are each glycosylated (N-linked (GlcNAc...) asparagine; by host). Residues 647–673 are disordered; the sequence is EPGGDGDHWAPEVPPTQPEPELEPESE.

It is found in the virion. Probable capsid-associated protein. This Choristoneura fumiferana nuclear polyhedrosis virus (CfMNPV) protein is Capsid-associated protein Vp91.